The following is a 233-amino-acid chain: Leucyl/phenylalanyl-tRNA--protein transferase (233 aa).

Belongs to the L/F-transferase family.

The protein localises to the cytoplasm. It carries out the reaction N-terminal L-lysyl-[protein] + L-leucyl-tRNA(Leu) = N-terminal L-leucyl-L-lysyl-[protein] + tRNA(Leu) + H(+). The catalysed reaction is N-terminal L-arginyl-[protein] + L-leucyl-tRNA(Leu) = N-terminal L-leucyl-L-arginyl-[protein] + tRNA(Leu) + H(+). The enzyme catalyses L-phenylalanyl-tRNA(Phe) + an N-terminal L-alpha-aminoacyl-[protein] = an N-terminal L-phenylalanyl-L-alpha-aminoacyl-[protein] + tRNA(Phe). Functionally, functions in the N-end rule pathway of protein degradation where it conjugates Leu, Phe and, less efficiently, Met from aminoacyl-tRNAs to the N-termini of proteins containing an N-terminal arginine or lysine. The sequence is that of Leucyl/phenylalanyl-tRNA--protein transferase from Chromobacterium violaceum (strain ATCC 12472 / DSM 30191 / JCM 1249 / CCUG 213 / NBRC 12614 / NCIMB 9131 / NCTC 9757 / MK).